A 380-amino-acid polypeptide reads, in one-letter code: Cytochrome b (380 aa).

4 consecutive transmembrane segments (helical) span residues 34-54 (FGSLLTICLLTQILTGLLLAM), 78-99 (WLIRNLHANGASFFFICIYLHI), 114-134 (WNTGVILLLTLMATAFVGYVL), and 179-199 (FFALHFLLPFMIVGLSMIHLT). Heme b contacts are provided by H84 and H98. H183 and H197 together coordinate heme b. H202 is an a ubiquinone binding site. 4 helical membrane-spanning segments follow: residues 227–247 (LKDILGFILMLLPLTTLALFS), 289–309 (LGGVLALAASVLILFLAPFLH), 321–341 (ISQLLFWILVANLLILTWVGS), and 348–368 (FIIIGQLASITYFTILLILFP).

It belongs to the cytochrome b family. In terms of assembly, the cytochrome bc1 complex contains 11 subunits: 3 respiratory subunits (MT-CYB, CYC1 and UQCRFS1), 2 core proteins (UQCRC1 and UQCRC2) and 6 low-molecular weight proteins (UQCRH/QCR6, UQCRB/QCR7, UQCRQ/QCR8, UQCR10/QCR9, UQCR11/QCR10 and a cleavage product of UQCRFS1). This cytochrome bc1 complex then forms a dimer. The cofactor is heme b.

The protein localises to the mitochondrion inner membrane. In terms of biological role, component of the ubiquinol-cytochrome c reductase complex (complex III or cytochrome b-c1 complex) that is part of the mitochondrial respiratory chain. The b-c1 complex mediates electron transfer from ubiquinol to cytochrome c. Contributes to the generation of a proton gradient across the mitochondrial membrane that is then used for ATP synthesis. This chain is Cytochrome b (MT-CYB), found in Pelecanoides garnotii (Peruvian diving petrel).